The sequence spans 190 residues: CASP-like protein 5A3 (190 aa).

Low complexity-rich tracts occupy residues M1–E12 and A20–G31. The interval M1–G31 is disordered. The Cytoplasmic portion of the chain corresponds to M1–P50. A helical membrane pass occupies residues A51–A71. Residues S72–A81 are Extracellular-facing. A helical transmembrane segment spans residues F82–V102. Topologically, residues D103–D126 are cytoplasmic. Residues G127–I147 form a helical membrane-spanning segment. The Extracellular portion of the chain corresponds to G148–T164. A helical transmembrane segment spans residues A165 to W185. Residues S186 to R190 are Cytoplasmic-facing.

It belongs to the Casparian strip membrane proteins (CASP) family. Homodimer and heterodimers.

It localises to the cell membrane. The sequence is that of CASP-like protein 5A3 from Zea mays (Maize).